A 550-amino-acid chain; its full sequence is Glycosyltransferase-like protein gnt12 (550 aa).

The segment at 1–29 is disordered; that stretch reads MSYLPLYNNNNNINNNNNNNNNRINNNKE. At 1–36 the chain is on the cytoplasmic side; it reads MSYLPLYNNNNNINNNNNNNNNRINNNKEKGVKNKP. Positions 8 to 25 are enriched in low complexity; sequence NNNNNINNNNNNNNNRIN. Residues 37-57 form a helical; Signal-anchor for type II membrane protein membrane-spanning segment; it reads FQIFISIVFIVFLCFFLIWSM. At 58 to 550 the chain is on the extracellular side; it reads EAKKDKNIKI…LFNEPLTNEC (493 aa). The span at 81–97 shows a compositional bias: low complexity; the sequence is LINEPINNNKNNKNNIP. The segment at 81–100 is disordered; that stretch reads LINEPINNNKNNKNNIPKNH. 3 N-linked (GlcNAc...) asparagine glycosylation sites follow: asparagine 233, asparagine 322, and asparagine 426.

It belongs to the glycosyltransferase 8 family. Highly divergent.

The protein localises to the membrane. The sequence is that of Glycosyltransferase-like protein gnt12 (gnt12) from Dictyostelium discoideum (Social amoeba).